The primary structure comprises 109 residues: MQAPVVTETCQTNEEGEQLVLRLRAPVERPRVTWGAGVIDNEHMGRLKSNCCCIYTPPRVWDDPSTWEPEEHETEHCRGHTLPEKKQKPQGGHGSDKDEDKGNCGCDHC.

The segment at 63 to 109 is disordered; sequence DPSTWEPEEHETEHCRGHTLPEKKQKPQGGHGSDKDEDKGNCGCDHC. 2 stretches are compositionally biased toward basic and acidic residues: residues 73–87 and 94–109; these read ETEH…EKKQ and GSDK…CDHC.

This is an uncharacterized protein from Caenorhabditis elegans.